The chain runs to 539 residues: G protein-coupled receptor associated sorting protein 3 (539 aa).

Basic residues predominate over residues 1–10 (MTGSKNKARA). 2 disordered regions span residues 1–111 (MTGS…DSWF) and 132–170 (NSVAKCENKPSTSIQARVEEHTPRTSHKSRSGAEEEEEE). Basic and acidic residues-rich tracts occupy residues 66–80 (VVAETKEGARPESKA) and 88–106 (FNHKAENKYARSARKDKPS). Over residues 132–146 (NSVAKCENKPSTSIQ) the composition is skewed to polar residues.

This sequence belongs to the GPRASP family. In terms of assembly, homodimer.

It localises to the cytoplasm. Its subcellular location is the nucleus. In terms of biological role, survival and differentiation promoting protein that plays a role in the regulation of neurosynaptogenesis. Induces phosphatase PP2A activity which results in APP dephosphorylation and inhibits BACE1-mediated processing of APP. In Rattus norvegicus (Rat), this protein is G protein-coupled receptor associated sorting protein 3 (Gprasp3).